The primary structure comprises 1318 residues: Major tegument protein (1318 aa).

It belongs to the herpesviridae MTP family. As to quaternary structure, interacts with host DAXX; this interaction disrupts the chromatin remodeling complex ATRX:DAXX and thus allows viral transcription. Interacts with host SMC6; this interaction targets SMC5-SMC6 complex for proteasomal degradation.

It localises to the virion tegument. Its subcellular location is the host nucleus. Tegument protein that plays a role in the inhibition of host intrinsic defenses to promote viral early gene activation. Interacts with host DAXX and thereby disrupts the complex between DAXX and ATRX. Suppresses the DAXX-ATRX dependent deposition of histone H3.3 on viral chromatin allowing viral transcription. Targets also host SMC5/6 for proteasomal degradation in a CUL7 and calpain-dependent manner to support nuclear membrane-less replication compartment formation and lytic virus replication. The sequence is that of Major tegument protein from Homo sapiens (Human).